A 636-amino-acid chain; its full sequence is Chaperone protein DnaK (636 aa).

The residue at position 198 (Thr-198) is a Phosphothreonine; by autocatalysis. Residues 600–636 are disordered; the sequence is IAQQQAQAQQGSAEAGAQSQEDDVVDAEFEEVKDDKK. Over residues 601–618 the composition is skewed to low complexity; that stretch reads AQQQAQAQQGSAEAGAQS. The span at 619 to 636 shows a compositional bias: acidic residues; sequence QEDDVVDAEFEEVKDDKK.

Belongs to the heat shock protein 70 family.

In terms of biological role, acts as a chaperone. The protein is Chaperone protein DnaK of Vibrio vulnificus (strain CMCP6).